The sequence spans 571 residues: Ubiquitin-like-specific protease 1C (571 aa).

Residues 221–260 (SESKDPKGDRRPNEAYGKGKPNESSPYLLVDDDDGDDDKV) form a disordered region. Over residues 222-233 (ESKDPKGDRRPN) the composition is skewed to basic and acidic residues. Residues His-426, Asp-449, and Cys-512 contribute to the active site.

Belongs to the peptidase C48 family.

It is found in the nucleus. The protein resides in the nucleoplasm. Functionally, protease that catalyzes two essential functions in the SUMO pathway: processing of full-length SUMOs to their mature forms and deconjugation of SUMO from targeted proteins. Cleaves precursors of SUM1 and SUM2, but not of SUM3 or SUM5. Able to release SUM1 and SUM2 from conjugates, but unable to cleave SUM3. Protease activity mainly directed at deconjugating SUM1 and SUM2 from their target proteins. Regulates salt stress responses and flowering time. Redundant with ULP1D. The protein is Ubiquitin-like-specific protease 1C (ULP1C) of Arabidopsis thaliana (Mouse-ear cress).